We begin with the raw amino-acid sequence, 187 residues long: Abscisic acid receptor PYL9 (187 aa).

The interval 27-178 (HLCRENQCTS…NLKSLADVSE (152 aa)) is START-like. Intrachain disulfides connect Cys29-Cys159 and Cys34-Cys159. Abscisate-binding positions include Lys63, 91 to 96 (ATTSTE), 118 to 124 (RLKNYSS), and Glu143. The short motif at 87–91 (SGLPA) is the Gate loop element. A Latch loop motif is present at residues 117–119 (HRL).

Belongs to the PYR/PYL/RCAR abscisic acid intracellular receptor family. In terms of assembly, homodimer. Monomer. Binds ABA on one subunit only. Binds to CARs protein in an ABA-independent manner, both at the plasma membrane and in the nucleus. Binds specifically (+)-ABA but not (-)-ABA. Interacts with HAB1, ABI1 and ABI2, and possibly with other PP2Cs. Interacts with TOPP1. Interacts with DDA1. As to expression, expressed in root tips, vascular tissues, stomata, flowers, pollen tubes and developing seeds.

The protein resides in the cytoplasm. It localises to the nucleus. The protein localises to the cell membrane. In terms of biological role, receptor for abscisic acid (ABA) required for ABA-mediated responses such as stomatal closure and germination inhibition. Inhibits the activity of group-A protein phosphatases type 2C (PP2Cs) in an ABA-independent manner but more efficiently when activated by ABA. Confers enhanced sensitivity to ABA. Can be activated only by (+)-ABA but not by (-)-ABA. This Arabidopsis thaliana (Mouse-ear cress) protein is Abscisic acid receptor PYL9 (PYL9).